We begin with the raw amino-acid sequence, 853 residues long: Protein translocase subunit SecA (853 aa).

ATP-binding positions include Gln-77, 95–99 (GEGKT), and Asp-532.

It belongs to the SecA family. As to quaternary structure, monomer and homodimer. Part of the essential Sec protein translocation apparatus which comprises SecA, SecYEG and auxiliary proteins SecDF. Other proteins may also be involved.

The protein resides in the cell inner membrane. Its subcellular location is the cytoplasm. It catalyses the reaction ATP + H2O + cellular proteinSide 1 = ADP + phosphate + cellular proteinSide 2.. Part of the Sec protein translocase complex. Interacts with the SecYEG preprotein conducting channel. Has a central role in coupling the hydrolysis of ATP to the transfer of proteins into and across the cell membrane, serving as an ATP-driven molecular motor driving the stepwise translocation of polypeptide chains across the membrane. The polypeptide is Protein translocase subunit SecA (Thermosipho melanesiensis (strain DSM 12029 / CIP 104789 / BI429)).